Reading from the N-terminus, the 364-residue chain is tRNA 2-selenouridine synthase (364 aa).

In terms of domain architecture, Rhodanese spans 14-137 (LIADTPIIDV…LRQTAIQATI (124 aa)). Residue Cys-97 is the S-selanylcysteine intermediate of the active site.

It belongs to the SelU family. In terms of assembly, monomer.

It carries out the reaction 5-methylaminomethyl-2-thiouridine(34) in tRNA + selenophosphate + (2E)-geranyl diphosphate + H2O + H(+) = 5-methylaminomethyl-2-selenouridine(34) in tRNA + (2E)-thiogeraniol + phosphate + diphosphate. The enzyme catalyses 5-methylaminomethyl-2-thiouridine(34) in tRNA + (2E)-geranyl diphosphate = 5-methylaminomethyl-S-(2E)-geranyl-thiouridine(34) in tRNA + diphosphate. It catalyses the reaction 5-methylaminomethyl-S-(2E)-geranyl-thiouridine(34) in tRNA + selenophosphate + H(+) = 5-methylaminomethyl-2-(Se-phospho)selenouridine(34) in tRNA + (2E)-thiogeraniol. The catalysed reaction is 5-methylaminomethyl-2-(Se-phospho)selenouridine(34) in tRNA + H2O = 5-methylaminomethyl-2-selenouridine(34) in tRNA + phosphate. Its function is as follows. Involved in the post-transcriptional modification of the uridine at the wobble position (U34) of tRNA(Lys), tRNA(Glu) and tRNA(Gln). Catalyzes the conversion of 2-thiouridine (S2U-RNA) to 2-selenouridine (Se2U-RNA). Acts in a two-step process involving geranylation of 2-thiouridine (S2U) to S-geranyl-2-thiouridine (geS2U) and subsequent selenation of the latter derivative to 2-selenouridine (Se2U) in the tRNA chain. The chain is tRNA 2-selenouridine synthase from Escherichia coli (strain K12 / MC4100 / BW2952).